Here is a 509-residue protein sequence, read N- to C-terminus: Scavenger receptor class B member 1 (509 aa).

Residues 1–11 (MGGSARARWVA) are Cytoplasmic-facing. A helical membrane pass occupies residues 12–32 (VGLGVVGLLCAVLGVVMILVM). The Extracellular segment spans residues 33–440 (PSLIKQQVLK…YTQLVLMPQV (408 aa)). N-linked (GlcNAc...) asparagine glycans are attached at residues Asn-102, Asn-108, Asn-173, Asn-212, Asn-227, Asn-255, Asn-310, Asn-330, and Asn-383. Residues Cys-251 and Cys-384 are joined by a disulfide bond. A helical membrane pass occupies residues 441–461 (LQYVQYVLLGLGGLLLLVPVI). Over 462–509 (YQLRSQEKCFLFWSGSKKGSQDKEAIQAYSESLMSPAAKGTVLQEAKL) the chain is Cytoplasmic.

This sequence belongs to the CD36 family. N-glycosylated. In terms of processing, the six cysteines of the extracellular domain are all involved in intramolecular disulfide bonds.

It is found in the cell membrane. Its subcellular location is the membrane. The protein resides in the caveola. In terms of biological role, receptor for different ligands such as phospholipids, cholesterol ester, lipoproteins, phosphatidylserine and apoptotic cells. Receptor for HDL, mediating selective uptake of cholesteryl ether and HDL-dependent cholesterol efflux. Also facilitates the flux of free and esterified cholesterol between the cell surface and apoB-containing lipoproteins and modified lipoproteins, although less efficiently than HDL. May be involved in the phagocytosis of apoptotic cells, via its phosphatidylserine binding activity. This chain is Scavenger receptor class B member 1 (SCARB1), found in Cricetulus griseus (Chinese hamster).